The chain runs to 239 residues: MKRPSGRAADQLRSIRITRNYTKHAEGSVLVEFGDTKVICTVSVESGVPRFLKGQGQGWLTAEYGMLPRATGERNQREASRGKQGGRTLEIQRLIGRSLRAALDMSKLGENTLYVDCDVIQADGGTRTASITGAMVALIDALKVLKKRGSLKGEPLKQMIAAVSVGIYQGEPVLDLDYLEDSAAETDLNVVMTNAGGFIEVQGTAEGAPFQPEEFNAMLALAQKGMNEIFELQKAALVD.

Residues Arg87 and 125-127 contribute to the phosphate site; that span reads GTR.

This sequence belongs to the RNase PH family. As to quaternary structure, homohexameric ring arranged as a trimer of dimers.

The catalysed reaction is tRNA(n+1) + phosphate = tRNA(n) + a ribonucleoside 5'-diphosphate. Phosphorolytic 3'-5' exoribonuclease that plays an important role in tRNA 3'-end maturation. Removes nucleotide residues following the 3'-CCA terminus of tRNAs; can also add nucleotides to the ends of RNA molecules by using nucleoside diphosphates as substrates, but this may not be physiologically important. Probably plays a role in initiation of 16S rRNA degradation (leading to ribosome degradation) during starvation. This chain is Ribonuclease PH, found in Ectopseudomonas mendocina (strain ymp) (Pseudomonas mendocina).